We begin with the raw amino-acid sequence, 304 residues long: N-acetyl-D-glucosamine kinase (304 aa).

Residues 4–11 (GFDMGGTK) and 133–140 (GLGGGLVI) each bind ATP. The Zn(2+) site is built by histidine 157, cysteine 177, cysteine 179, and cysteine 184.

This sequence belongs to the ROK (NagC/XylR) family. NagK subfamily.

The catalysed reaction is N-acetyl-D-glucosamine + ATP = N-acetyl-D-glucosamine 6-phosphate + ADP + H(+). Its pathway is cell wall biogenesis; peptidoglycan recycling. Functionally, catalyzes the phosphorylation of N-acetyl-D-glucosamine (GlcNAc) derived from cell-wall degradation, yielding GlcNAc-6-P. The protein is N-acetyl-D-glucosamine kinase of Pectobacterium carotovorum subsp. carotovorum (strain PC1).